Here is a 409-residue protein sequence, read N- to C-terminus: O-glucosyltransferase rumi (409 aa).

A signal peptide spans 1-20 (MLINVVLIILLVGLNGKASG). Cystine bridges form between Cys62/Cys73, Cys71/Cys376, Cys118/Cys124, and Cys280/Cys303. The active-site Proton donor/acceptor is Asp149. An interaction with the consensus sequence C-X-S-X-[PA]-C in peptide substrates region spans residues 190-195 (ATKLHP). UDP-alpha-D-glucose-binding positions include 227–231 (RGSRT), Arg235, 274–276 (VSF), and 292–296 (AASFR). Positions 406-409 (KDEL) match the Prevents secretion from ER motif.

It belongs to the glycosyltransferase 90 family.

It localises to the endoplasmic reticulum lumen. It participates in protein modification; protein glycosylation. Its function is as follows. Protein O-glucosyltransferase. Catalyzes the reaction that attaches glucose through an O-glycosidic linkage to a conserved serine residue found in the consensus sequence C-X-S-X-[PA]-C in epidermal growth factor-like repeats. Regulates Notch signaling by glucosylating Notch in the ER, glucosylation is required for the correct folding and cleavage of Notch. The sequence is that of O-glucosyltransferase rumi from Drosophila pseudoobscura pseudoobscura (Fruit fly).